Consider the following 198-residue polypeptide: Copy number protein (198 aa).

It localises to the cell membrane. Its function is as follows. Involved in copy number control of pIP404. This basic and hydrophobic protein may exert its effect from the cytoplasmic membrane. This chain is Copy number protein (cop), found in Clostridium perfringens.